We begin with the raw amino-acid sequence, 736 residues long: Copper-exporting P-type ATPase (736 aa).

Positions 1–17 (MKHDHHQGHTHSGKGHA) are enriched in basic residues. Residues 1-32 (MKHDHHQGHTHSGKGHACHHEHNSPKTQQASS) are disordered. 6 helical membrane-spanning segments follow: residues 85-105 (FWIA…GHGL), 114-134 (SSWI…WPFF), 149-169 (FTLI…AVLW), 183-203 (VVAV…LGQV), 341-361 (GWFV…WALL), and 369-389 (YGLI…LGLA). The active-site 4-aspartylphosphate intermediate is D426. Mg(2+) contacts are provided by D426, T428, and D624. Transmembrane regions (helical) follow at residues 682-702 (LFFA…VLYP) and 706-726 (LLLS…SVII).

It belongs to the cation transport ATPase (P-type) (TC 3.A.3) family. Type IB subfamily. It depends on Mg(2+) as a cofactor.

It localises to the cell inner membrane. The catalysed reaction is Cu(+)(in) + ATP + H2O = Cu(+)(out) + ADP + phosphate + H(+). Its activity is regulated as follows. Activated by phospholipids, Mg(2+) and Cu(+). Its function is as follows. Couples the hydrolysis of ATP with the export of copper. This is Copper-exporting P-type ATPase from Legionella pneumophila subsp. pneumophila (strain Philadelphia 1 / ATCC 33152 / DSM 7513).